We begin with the raw amino-acid sequence, 235 residues long: Putative HAD-hydrolase YfnB (235 aa).

D10 functions as the Nucleophile in the catalytic mechanism.

This sequence belongs to the HAD-like hydrolase superfamily. YjjG family.

This is Putative HAD-hydrolase YfnB (yfnB) from Bacillus subtilis (strain 168).